The following is a 164-amino-acid chain: Putative 4-hydroxy-4-methyl-2-oxoglutarate aldolase (164 aa).

Residues 79 to 82 (GDRL) and Arg-101 each bind substrate. Residue Asp-102 participates in a divalent metal cation binding.

The protein belongs to the class II aldolase/RraA-like family. As to quaternary structure, homotrimer. It depends on a divalent metal cation as a cofactor.

The catalysed reaction is 4-hydroxy-4-methyl-2-oxoglutarate = 2 pyruvate. The enzyme catalyses oxaloacetate + H(+) = pyruvate + CO2. Its function is as follows. Catalyzes the aldol cleavage of 4-hydroxy-4-methyl-2-oxoglutarate (HMG) into 2 molecules of pyruvate. Also contains a secondary oxaloacetate (OAA) decarboxylase activity due to the common pyruvate enolate transition state formed following C-C bond cleavage in the retro-aldol and decarboxylation reactions. This is Putative 4-hydroxy-4-methyl-2-oxoglutarate aldolase from Halorhodospira halophila (strain DSM 244 / SL1) (Ectothiorhodospira halophila (strain DSM 244 / SL1)).